A 405-amino-acid polypeptide reads, in one-letter code: Patatin-like protein 2 (405 aa).

The PNPLA domain occupies 24 to 230; the sequence is LSIDGGGVRG…AANNPTLCAM (207 aa). A GXGXXG motif is present at residues 28-33; the sequence is GGGVRG. The GXSXG motif lies at 66 to 70; sequence GTSTG. Ser-68 serves as the catalytic Nucleophile. The active-site Proton acceptor is Asp-217. Positions 217-219 match the DGA/G motif; the sequence is DGG.

The protein belongs to the patatin family.

Possesses non-specific lipolytic acyl hydrolase (LAH) activity. Hydrolyzes phospholipids as well as galactolipids. May play a role in disease resistance. This Oryza sativa subsp. indica (Rice) protein is Patatin-like protein 2 (PLP2).